A 146-amino-acid chain; its full sequence is Spermidine export protein MdtJ (146 aa).

The next 4 helical transmembrane spans lie at 1 to 21, 31 to 51, 54 to 74, and 76 to 96; these read MIYW…TLSM, TGMI…AIAV, VALG…ITTF, and VLWF…MLIA.

The protein belongs to the drug/metabolite transporter (DMT) superfamily. Small multidrug resistance (SMR) (TC 2.A.7.1) family. MdtJ subfamily. In terms of assembly, forms a complex with MdtI.

It localises to the cell inner membrane. Its function is as follows. Catalyzes the excretion of spermidine. This is Spermidine export protein MdtJ from Proteus mirabilis (strain HI4320).